Reading from the N-terminus, the 401-residue chain is Coenzyme A biosynthesis bifunctional protein CoaBC (401 aa).

Positions 1 to 190 are phosphopantothenoylcysteine decarboxylase; it reads MQTLAGKKIL…FQPKPLQDKS (190 aa). C159 acts as the Proton donor in catalysis. The tract at residues 191–401 is phosphopantothenate--cysteine ligase; that stretch reads ILITAGPTRE…LKQIQTLMGH (211 aa). CTP contacts are provided by residues D279, K289, 307–310, F326, K340, and K344; that span reads PDIV.

This sequence in the N-terminal section; belongs to the HFCD (homo-oligomeric flavin containing Cys decarboxylase) superfamily. It in the C-terminal section; belongs to the PPC synthetase family. Requires Mg(2+) as cofactor. FMN serves as cofactor.

The catalysed reaction is N-[(R)-4-phosphopantothenoyl]-L-cysteine + H(+) = (R)-4'-phosphopantetheine + CO2. It carries out the reaction (R)-4'-phosphopantothenate + L-cysteine + CTP = N-[(R)-4-phosphopantothenoyl]-L-cysteine + CMP + diphosphate + H(+). Its pathway is cofactor biosynthesis; coenzyme A biosynthesis; CoA from (R)-pantothenate: step 2/5. The protein operates within cofactor biosynthesis; coenzyme A biosynthesis; CoA from (R)-pantothenate: step 3/5. Catalyzes two sequential steps in the biosynthesis of coenzyme A. In the first step cysteine is conjugated to 4'-phosphopantothenate to form 4-phosphopantothenoylcysteine. In the second step the latter compound is decarboxylated to form 4'-phosphopantotheine. The chain is Coenzyme A biosynthesis bifunctional protein CoaBC from Vibrio vulnificus (strain YJ016).